Here is a 792-residue protein sequence, read N- to C-terminus: MYAFYSLLIYIFYSLFRRDGGAAAVSDPGDPTQKSGGQPRGRRRPDQFTSELWSELNSLAGCSESEDGQKGAEGGAAEVSLEEALMRLAEFLSVQLGAEESCGTTPDLGKPGEVPPLLTVTSQLLALLAWTRSPRGRQALLQGTQPTCPVQPSTLDGSLSQEESSSQPTPILDEVPRDETQEHQPLQLEEEQRVWQRLEQLILGQLEELRQQLEQQEEELSRLRLGVGVTDSEKRVQHLTLENEALKQSLSLTRDLLLHWGPGPLPRLSQEEAGALLELQGQLQEAQDTTEALRVQLGAQELQLQGLRGALRQLQQETEQNCRQELQQVHGQLAGLRARMASLRQGCGDLRGLVSTFTQSCQGSLSEAQGQVSWALGALSAGKAKTQLSEGNQAPPTGCSGRLLELKGNIRVLCRLRPAEGQPSSLVSVEPGQGGTITTCYRGRQHCFRLDWVFPQDASQEEVFRQLEPAVLSCLQGYSVCIFTYGQTGTGKTYSMEGPPEDPGIAPRALQLLFREMGTGGHHHVTLSMVEIYNEAVRDLLATGPPERLVVRQGPAGQGGIQVAGLTHWDVPNLETLHQMLSLGRSNRATAATVMNQHSSRSHALVTLTLRAASPPRPQGITGTLHLVDLAGSERVWKAGVASPVQRDPNGARRLREAQAINRSLLALGGVMAALRARRPHVPFRDSQLTRLLQPALWAGTTAVLLLQISTRAEDLGETICSLKFAERVGQVELGPARRRRAPRSGTPSSLSTDTPLTGTSCTPTPSPGSPPSTSPNSCSGLTLEPPGDPPP.

Disordered stretches follow at residues 22–45 (AAAV…RRRP) and 142–184 (QGTQ…QEHQ). Positions 142 to 169 (QGTQPTCPVQPSTLDGSLSQEESSSQPT) are enriched in polar residues. A coiled-coil region spans residues 186–347 (LQLEEEQRVW…ARMASLRQGC (162 aa)). A Kinesin motor domain is found at 409 to 732 (NIRVLCRLRP…LKFAERVGQV (324 aa)). An ATP-binding site is contributed by 486–493 (GQTGTGKT). Residues 734 to 792 (LGPARRRRAPRSGTPSSLSTDTPLTGTSCTPTPSPGSPPSTSPNSCSGLTLEPPGDPPP) form a disordered region. Over residues 744–764 (RSGTPSSLSTDTPLTGTSCTP) the composition is skewed to low complexity. A compositionally biased stretch (pro residues) spans 765–774 (TPSPGSPPST).

Belongs to the TRAFAC class myosin-kinesin ATPase superfamily. Kinesin family. Present in axons and dendrites of neurons in the central and peripheral nervous systems.

Its subcellular location is the cytoplasm. It is found in the cytoskeleton. In terms of biological role, may play a role in microtubule-dependent retrograde axonal transport. May function as the motor for the transport of multivesicular body (MVB)-like organelles in dendrites. The polypeptide is Kinesin-like protein KIFC2 (Kifc2) (Mus musculus (Mouse)).